The chain runs to 549 residues: Undecaprenyl phosphate-alpha-4-amino-4-deoxy-L-arabinose arabinosyl transferase (549 aa).

12 helical membrane-spanning segments follow: residues 9–29, 80–100, 112–132, 133–153, 176–196, 204–224, 256–276, 288–308, 312–332, 346–366, 376–396, and 402–422; these read LLLI…GLWI, LFGV…LAYL, SLAC…SGYA, NLDP…WHAL, FLTK…PYML, LLGY…PWAL, PWWF…GLLP, QAPV…FSLS, LPTY…HALV, NGLL…YLQL, FELF…LAQW, and AWAA…AAMP.

Belongs to the glycosyltransferase 83 family.

The protein resides in the cell inner membrane. The enzyme catalyses 4-amino-4-deoxy-alpha-L-arabinopyranosyl di-trans,octa-cis-undecaprenyl phosphate + lipid IVA = lipid IIA + di-trans,octa-cis-undecaprenyl phosphate.. The protein operates within lipopolysaccharide metabolism; 4-amino-4-deoxy-beta-L-arabinose-lipid A biosynthesis. Its function is as follows. Catalyzes the transfer of the L-Ara4N moiety of the glycolipid undecaprenyl phosphate-alpha-L-Ara4N to lipid A. The modified arabinose is attached to lipid A and is required for resistance to polymyxin and cationic antimicrobial peptides. The polypeptide is Undecaprenyl phosphate-alpha-4-amino-4-deoxy-L-arabinose arabinosyl transferase (Pseudomonas aeruginosa (strain LESB58)).